A 120-amino-acid polypeptide reads, in one-letter code: Large ribosomal subunit protein bL21 (120 aa).

The protein belongs to the bacterial ribosomal protein bL21 family. In terms of assembly, part of the 50S ribosomal subunit. Contacts protein L20.

In terms of biological role, this protein binds to 23S rRNA in the presence of protein L20. This Roseiflexus castenholzii (strain DSM 13941 / HLO8) protein is Large ribosomal subunit protein bL21.